A 683-amino-acid chain; its full sequence is Phenoloxidase 3 (683 aa).

A propeptide spanning residues 1–48 is cleaved from the precursor; sequence MADKKNLLLLFDHPTEPVFMDKGGNGTVFDVPASYVTDRYNKMCKKVQ. N-linked (GlcNAc...) asparagine glycosylation is present at Asn-25. His-209, His-213, and His-239 together coordinate Cu cation. The active-site Proton acceptor is the Glu-351. Asn-358 carries an N-linked (GlcNAc...) asparagine glycan. Residues His-366, His-370, and His-406 each contribute to the Cu cation site. N-linked (GlcNAc...) asparagine glycans are attached at residues Asn-492 and Asn-514. Intrachain disulfides connect Cys-574–Cys-617 and Cys-576–Cys-624.

This sequence belongs to the tyrosinase family. Cu(2+) serves as cofactor. Post-translationally, upon activation, a trypsin type protease cleaves prophenol oxidase to yield the active enzyme.

The protein localises to the secreted. The catalysed reaction is 2 L-dopa + O2 = 2 L-dopaquinone + 2 H2O. It carries out the reaction L-tyrosine + O2 = L-dopaquinone + H2O. Functionally, this is a copper-containing oxidase that functions in the formation of pigments such as melanins and other polyphenolic compounds. Catalyzes the rate-limiting conversions of tyrosine to DOPA, DOPA to DOPA-quinone and possibly 5,6 dihydroxyindole to indole-5'6 quinone. This is Phenoloxidase 3 (PPO3) from Drosophila erecta (Fruit fly).